Consider the following 646-residue polypeptide: Macrolide export ATP-binding/permease protein MacB (646 aa).

Positions 5-243 (IELKGVSRTY…TLPKTNRIRQ (239 aa)) constitute an ABC transporter domain. 41 to 48 (GASGSGKS) is an ATP binding site. Helical transmembrane passes span 272–292 (TLTMIGIVFGIASVVTVVALG), 518–538 (FSILILMVACISLMIGSIGVM), 570–590 (IIEAVLVCLIGGALGIALSYI), and 611–631 (AAVAAFFCSTLIGIIFGYLPA).

It belongs to the ABC transporter superfamily. Macrolide exporter (TC 3.A.1.122) family. In terms of assembly, homodimer. Part of the tripartite efflux system MacAB-TolC, which is composed of an inner membrane transporter, MacB, a periplasmic membrane fusion protein, MacA, and an outer membrane component, TolC. The complex forms a large protein conduit and can translocate molecules across both the inner and outer membranes. Interacts with MacA.

It localises to the cell inner membrane. Functionally, part of the tripartite efflux system MacAB-TolC. MacB is a non-canonical ABC transporter that contains transmembrane domains (TMD), which form a pore in the inner membrane, and an ATP-binding domain (NBD), which is responsible for energy generation. Confers resistance against macrolides. The polypeptide is Macrolide export ATP-binding/permease protein MacB (Escherichia coli).